The following is a 119-amino-acid chain: Aspartate 1-decarboxylase (119 aa).

The active-site Schiff-base intermediate with substrate; via pyruvic acid is serine 25. A Pyruvic acid (Ser) modification is found at serine 25. Threonine 57 contributes to the substrate binding site. The Proton donor role is filled by tyrosine 58. Substrate is bound at residue 73–75 (GAA).

The protein belongs to the PanD family. As to quaternary structure, heterooctamer of four alpha and four beta subunits. The cofactor is pyruvate. In terms of processing, is synthesized initially as an inactive proenzyme, which is activated by self-cleavage at a specific serine bond to produce a beta-subunit with a hydroxyl group at its C-terminus and an alpha-subunit with a pyruvoyl group at its N-terminus.

The protein localises to the cytoplasm. The catalysed reaction is L-aspartate + H(+) = beta-alanine + CO2. Its pathway is cofactor biosynthesis; (R)-pantothenate biosynthesis; beta-alanine from L-aspartate: step 1/1. In terms of biological role, catalyzes the pyruvoyl-dependent decarboxylation of aspartate to produce beta-alanine. This chain is Aspartate 1-decarboxylase, found in Thermosipho melanesiensis (strain DSM 12029 / CIP 104789 / BI429).